Here is a 363-residue protein sequence, read N- to C-terminus: DNA replication and repair protein RecF (363 aa).

An ATP-binding site is contributed by 30–37 (GNNAQGKT).

The protein belongs to the RecF family.

It is found in the cytoplasm. Functionally, the RecF protein is involved in DNA metabolism; it is required for DNA replication and normal SOS inducibility. RecF binds preferentially to single-stranded, linear DNA. It also seems to bind ATP. This Clostridium acetobutylicum (strain ATCC 824 / DSM 792 / JCM 1419 / IAM 19013 / LMG 5710 / NBRC 13948 / NRRL B-527 / VKM B-1787 / 2291 / W) protein is DNA replication and repair protein RecF.